The following is a 699-amino-acid chain: PTS system glucose-specific EIICBA component (699 aa).

A PTS EIIC type-1 domain is found at 3–424; that stretch reads KALFGVLQKI…FNLKTPGRED (422 aa). Helical transmembrane passes span 16 to 36, 66 to 86, 89 to 109, 139 to 159, 180 to 200, 233 to 253, 283 to 303, 313 to 333, 338 to 358, 365 to 385, and 388 to 408; these read LMLPVAILPAAGILLAIGNAM, IVFDNLPLLFAVGVAIGLANG, VAGIAAIIGYLVMNVSMSAVL, IPTLATGVFGGIIVGVLAALL, FVPIVTSISALILGLIMLVIW, LIPFGLHHIFYSPFWYEFFSY, FMTGKYPFMMFGLPAAALAIY, LVAGIMGSAALTSFLTGITEP, FLFVAPVLFAIHCLFAGLSFM, VKIGMTFSGGLIDYFLFGILP, and TAWWLVIPVGLGLAVIYYFGF. Residues 439–520 form the PTS EIIB type-1 domain; the sequence is GDLPYEILQA…QDIIAGRKPR (82 aa). The active-site Phosphocysteine intermediate; for EIIB activity is cysteine 461. Residues 568-672 form the PTS EIIA type-1 domain; sequence DQVFSGKMMG…SLMTPIVFTN (105 aa). Histidine 620 functions as the Tele-phosphohistidine intermediate; for EIIA activity in the catalytic mechanism.

The protein localises to the cell membrane. The enzyme catalyses N(pros)-phospho-L-histidyl-[protein] + D-glucose(out) = D-glucose 6-phosphate(in) + L-histidyl-[protein]. It catalyses the reaction D-glucosamine(out) + N(pros)-phospho-L-histidyl-[protein] = D-glucosamine 6-phosphate(in) + L-histidyl-[protein]. In terms of biological role, the phosphoenolpyruvate-dependent sugar phosphotransferase system (sugar PTS), a major carbohydrate active transport system, catalyzes the phosphorylation of incoming sugar substrates concomitantly with their translocation across the cell membrane. This system is involved in glucose transport. The system can also transport glucosamine. In addition, plays an important role in the phosphorylation of EIIA-deficient PTS transporters. The EIIA domain can transfer a phosphoryl group to EIIA-deficient PTS transporters, enabling growth with maltose, N-acetylglucosamine, sucrose or trehalose as the sole carbon source. This is PTS system glucose-specific EIICBA component (ptsG) from Bacillus subtilis (strain 168).